Consider the following 571-residue polypeptide: Chondroitin sulfate proteoglycan 5 (571 aa).

The first 30 residues, 1–30 (MGRAGGGGPGWGPPPVLLLLGVTLVLTAGA), serve as a signal peptide directing secretion. The Extracellular segment spans residues 31–428 (VPAREAGSAI…SIITDFQVMC (398 aa)). O-linked (Xyl...) (chondroitin sulfate) serine glycosylation is present at Ser38. Residue Asn57 is glycosylated (N-linked (GlcNAc...) asparagine). The interval 57-91 (NDTREEAGLPAAGEDETSWTERGSELAAVGPGVGP) is disordered. A glycan (O-linked (GalNAc...) threonine) is linked at Thr76. O-linked (Xyl...) (chondroitin sulfate) serine glycosylation is present at Ser123. Thr132 carries an O-linked (GalNAc...) threonine glycan. Disordered stretches follow at residues 137 to 169 (DEALGSSTMPPAIPEATEASGPPSPTLRDKPSL), 186 to 254 (GGST…TPSW), and 279 to 357 (DDLE…DLAT). A glycan (O-linked (GalNAc...) serine) is linked at Ser143. 2 O-linked (GalNAc...) threonine glycosylation sites follow: Thr144 and Thr153. Residues Ser156 and Ser160 are each glycosylated (O-linked (GalNAc...) serine). O-linked (GalNAc...) threonine glycosylation is found at Thr162 and Thr198. Acidic residues predominate over residues 214-223 (IDIDYFEGLD). Thr240 is a glycosylation site (O-linked (GalNAc...) threonine). Positions 270 to 306 (DFYPTTSFYDDLEEEEEEEEDKDAVGGGDLEDESDLL) are interaction with TNC and TNR. Acidic residues predominate over residues 279-291 (DDLEEEEEEEEDK). Residues Thr318 and Thr322 are each glycosylated (O-linked (GalNAc...) threonine). Asn372 carries an N-linked (GlcNAc...) asparagine glycan. The EGF-like domain maps to 376-418 (RSVCDLFPSYCHNGGQCYLVENIGAFCRCNTQDYIWHKGMRCE). 3 disulfide bridges follow: Cys379–Cys392, Cys386–Cys402, and Cys404–Cys417. A helical membrane pass occupies residues 429–449 (VAVGSAALVLLLLFMMTVFFA). The interaction with GOPC stretch occupies residues 447–465 (FFAKKLYLLKTENTKLRRT). At 450–571 (KKLYLLKTEN…EVNCLQNNLT (122 aa)) the chain is on the cytoplasmic side. Ser472, Ser480, Ser488, and Ser548 each carry phosphoserine. Positions 538-563 (EESFNIQNSMSPKLEGGKGDQDDLEV) are disordered.

In terms of assembly, interacts with ERBB3 and GOPC. Binds TNR and probably TNC. Interacts with MDK; this interaction is independent of the presence of chondroitin sulfate chains and promotes elongation of oligodendroglial precursor-like cells. In terms of processing, N-glycosylated. Post-translationally, O-glycosylated; contains chondroitin sulfate glycans. Part-time proteoglycan, expressed in part as a proteoglycan exhibiting chondroitin sulfate glycans and in part as a non-proteoglycan form. The relative amount of both forms depends on tissues and tissue maturation. Phosphorylated; in intracellular and extracellular parts. Expressed in cerebral cortex and cerebellum. Expressed in retina (at protein level).

It is found in the cell membrane. It localises to the synaptic cell membrane. Its subcellular location is the endoplasmic reticulum membrane. The protein localises to the golgi apparatus membrane. The protein resides in the cell surface. It is found in the secreted. Functionally, may function as a growth and differentiation factor involved in neuritogenesis. May induce ERBB3 activation. The sequence is that of Chondroitin sulfate proteoglycan 5 (Cspg5) from Rattus norvegicus (Rat).